Here is a 487-residue protein sequence, read N- to C-terminus: Multiple inositol polyphosphate phosphatase 1 (487 aa).

A signal peptide spans 1-30 (MLRAPGCLLRTSVAPAAALAAALLSSLARC). Residue His-89 is part of the active site. N-linked (GlcNAc...) asparagine glycosylation is found at Asn-242 and Asn-481. Residues 484–487 (SDEL) carry the Prevents secretion from ER motif.

It belongs to the histidine acid phosphatase family. MINPP1 subfamily. N-glycosylated. In terms of tissue distribution, widely expressed with highest levels in kidney, liver, cerebellum and placenta.

Its subcellular location is the endoplasmic reticulum lumen. It is found in the secreted. The protein localises to the cell membrane. The catalysed reaction is 1D-myo-inositol hexakisphosphate + H2O = 1D-myo-inositol 1,2,4,5,6-pentakisphosphate + phosphate. It carries out the reaction 1D-myo-inositol 1,2,4,5,6-pentakisphosphate + H2O = 1D-myo-inositol 1,2,5,6-tetrakisphosphate + phosphate. The enzyme catalyses 1D-myo-inositol 1,2,5,6-tetrakisphosphate + H2O = 1D-myo-inositol 1,2,6-trisphosphate + phosphate. It catalyses the reaction 1D-myo-inositol 1,2,6-trisphosphate + H2O = 1D-myo-inositol 1,2-bisphosphate + phosphate. The catalysed reaction is 1D-myo-inositol 1,2-bisphosphate + H2O = 1D-myo-inositol 2-phosphate + phosphate. It carries out the reaction 1D-myo-inositol hexakisphosphate + H2O = 1D-myo-inositol 1,2,3,5,6-pentakisphosphate + phosphate. The enzyme catalyses 1D-myo-inositol 1,2,3,5,6-pentakisphosphate + H2O = 1D-myo-inositol 1,2,3,6-tetrakisphosphate + phosphate. It catalyses the reaction 1D-myo-inositol 1,2,3,6-tetrakisphosphate + H2O = 1D-myo-inositol 1,2,3-trisphosphate + phosphate. The catalysed reaction is 1D-myo-inositol 1,2,3-trisphosphate + H2O = 1D-myo-inositol 2,3-bisphosphate + phosphate. It carries out the reaction 1D-myo-inositol 2,3-bisphosphate + H2O = 1D-myo-inositol 2-phosphate + phosphate. The enzyme catalyses 1D-myo-inositol 1,3,4,5,6-pentakisphosphate + H2O = 1D-myo-inositol 1,4,5,6-tetrakisphosphate + phosphate. It catalyses the reaction 1D-myo-inositol 1,4,5,6-tetrakisphosphate + H2O = 1D-myo-inositol 1,4,5-trisphosphate + phosphate. The catalysed reaction is (2R)-2,3-bisphosphoglycerate + H2O = (2R)-2-phosphoglycerate + phosphate. Multiple inositol polyphosphate phosphatase that hydrolyzes 1D-myo-inositol 1,3,4,5,6-pentakisphosphate (InsP5[2OH]) and 1D-myo-inositol hexakisphosphate (InsP6) to a range of less phosphorylated inositol phosphates. This regulates the availability of these various small molecule second messengers and metal chelators which control many aspects of cell physiology. Has a weak in vitro activity towards 1D-myo-inositol 1,4,5-trisphosphate which is unlikely to be physiologically relevant. By regulating intracellular inositol polyphosphates pools, which act as metal chelators, it may control the availability of intracellular calcium and iron, which are important for proper neuronal development and homeostasis. May have a dual substrate specificity, and function as a 2,3-bisphosphoglycerate 3-phosphatase hydrolyzing 2,3-bisphosphoglycerate to 2-phosphoglycerate. 2,3-bisphosphoglycerate (BPG) is formed as part of the Rapoport-Luebering glycolytic bypass and is a regulator of systemic oxygen homeostasis as the major allosteric effector of hemoglobin. This Homo sapiens (Human) protein is Multiple inositol polyphosphate phosphatase 1.